We begin with the raw amino-acid sequence, 114 residues long: PDZK1-interacting protein 1 (114 aa).

Residues 1-28 are Extracellular-facing; that stretch reads MSALSLLILGLLTAVPPASCQQGLGNLQ. Residues 29-51 form a helical membrane-spanning segment; that stretch reads PWMQGLIAVAVFLVLVAIAFAVN. Over 52-114 the chain is Cytoplasmic; it reads HFWCQEEPEP…EEGKVRSTPM (63 aa). The residue at position 85 (S85) is a Phosphoserine. The segment at 94 to 114 is disordered; it reads EHENAYENVPEEEGKVRSTPM. Positions 105–114 are enriched in basic and acidic residues; that stretch reads EEGKVRSTPM.

This sequence belongs to the PDZK1-interacting protein 1/SMIM24 family. In terms of assembly, forms a heterodimer (via N-terminal transmembrane helix) with SLC5A2/SGLT2 (via TM13); this interaction enhances SLC5A2 transporter activity. Interacts with PDZK1.

It is found in the apical cell membrane. In terms of biological role, auxiliary protein of electrogenic Na(+)-coupled sugar symporter SLC5A2/SGLT2 and SLC5A1/SGLT1. Essential for the transporter activity of SLC5A2/SGLT2 but not SLC5A1/SGLT1. The chain is PDZK1-interacting protein 1 from Homo sapiens (Human).